We begin with the raw amino-acid sequence, 257 residues long: Thiazole synthase (257 aa).

Catalysis depends on Lys96, which acts as the Schiff-base intermediate with DXP. Residues Gly157, 184 to 185 (AG), and 206 to 207 (NT) each bind 1-deoxy-D-xylulose 5-phosphate.

The protein belongs to the ThiG family. In terms of assembly, homotetramer. Forms heterodimers with either ThiH or ThiS.

The protein localises to the cytoplasm. It catalyses the reaction [ThiS sulfur-carrier protein]-C-terminal-Gly-aminoethanethioate + 2-iminoacetate + 1-deoxy-D-xylulose 5-phosphate = [ThiS sulfur-carrier protein]-C-terminal Gly-Gly + 2-[(2R,5Z)-2-carboxy-4-methylthiazol-5(2H)-ylidene]ethyl phosphate + 2 H2O + H(+). It participates in cofactor biosynthesis; thiamine diphosphate biosynthesis. Functionally, catalyzes the rearrangement of 1-deoxy-D-xylulose 5-phosphate (DXP) to produce the thiazole phosphate moiety of thiamine. Sulfur is provided by the thiocarboxylate moiety of the carrier protein ThiS. In vitro, sulfur can be provided by H(2)S. This chain is Thiazole synthase, found in Bartonella quintana (strain Toulouse) (Rochalimaea quintana).